Here is a 52-residue protein sequence, read N- to C-terminus: Large ribosomal subunit protein bL32c (52 aa).

It belongs to the bacterial ribosomal protein bL32 family.

The protein localises to the plastid. It is found in the chloroplast. The chain is Large ribosomal subunit protein bL32c from Capsella bursa-pastoris (Shepherd's purse).